We begin with the raw amino-acid sequence, 329 residues long: Secretory carrier-associated membrane protein 2 (329 aa).

Disordered stretches follow at residues M1–P21 and V51–P72. The Cytoplasmic portion of the chain corresponds to M1 to Y153. Residues Y154–F174 form a helical membrane-spanning segment. The Lumenal portion of the chain corresponds to S175–G181. Residues V182–W202 traverse the membrane as a helical segment. Over Y203–F218 the chain is Cytoplasmic. The interaction with SLC9A7 stretch occupies residues Y203 to F218. The helical transmembrane segment at F219 to I239 threads the bilayer. Over P240 to S262 the chain is Lumenal. Residues V263–L283 form a helical membrane-spanning segment. The Cytoplasmic portion of the chain corresponds to Q284–N329. Phosphoserine occurs at positions 319 and 320.

The protein belongs to the SCAMP family. In terms of assembly, interacts with SLC6A4 and SLC9A7. Interacts with SLC9A5; this interaction regulates SLC9A5 cell-surface targeting and SLC9A5 activity. Widely expressed.

Its subcellular location is the golgi apparatus. It is found in the trans-Golgi network membrane. The protein localises to the recycling endosome membrane. Functions in post-Golgi recycling pathways. Acts as a recycling carrier to the cell surface. The sequence is that of Secretory carrier-associated membrane protein 2 (SCAMP2) from Homo sapiens (Human).